The chain runs to 325 residues: Gamma-hemolysin component B (325 aa).

An N-terminal signal peptide occupies residues M1 to N25.

It belongs to the aerolysin family. In terms of assembly, toxicity requires sequential binding and synergistic association of a class S and a class F component which form heterooligomeric complexes. HlgB (class F) associates with either hlgA thus forming an AB toxin or with hlgC thus forming a CB toxin. Interacts with host AMFR.

Toxin that seems to act by forming pores in the membrane of the cell. Has a hemolytic and a leucotoxic activity. Promotes host AMFR-mediated inflammation by mediating 'Lys-27'-linked ubiquitination of TAB3, TAK1-TAB3 complex formation and phosphorylation of TAK1/MAP3K7. In turn, activates host NF-kappa-B signaling pathway. In Staphylococcus aureus (strain MRSA252), this protein is Gamma-hemolysin component B (hlgB).